We begin with the raw amino-acid sequence, 1887 residues long: MAARGRGLLLLTLSVLLAAGPSAAAAKLNIPKVLLPFTRATRVNFTLEASEGCYRWLSTRPEVASIEPLGLDEQQCSQKAVVQARLTQPARLTSIIFAEDITTGQVLRCDAIVDLIHDIQIVSTTRELYLEDSPLELKIQALDSEGNTFSTLAGLVFEWTIVKDSEADRFSDSHNALRILTFLESTYIPPSYISEMEKAAKQGDTILVSGMKTGSSKLKARIQEAVYKNVRPAEVRLLILENILLNPAYDVYLMVGTSIHYKVQKIRQGKITELSMPSDQYELQLQNSIPGPEGDPARPVAVLAQDTSMVTALQLGQSSLVLGHRSIRMQGASRLPNSTIYVVEPGYLGFTVHPGDRWVLETGRLYEITIEVFDKFSNKVYVSDNIRIETVLPAEFFEVLSSSQNGSYHRIRALKRGQTAIDAALTSVVDQDGGVHILQVPVWNQQEVEIHIPITLYPSILTFPWQPKTGAYQYTIRAHGGSGNFSWSSSSHLVATVTVKGVMTTGSDIGFSVIQAHDVQNPLHFGEMKVYVIEPHSMEFAPCQVEARVGQALELPLRISGLMPGGASEVVTLSDCSHFDLAVEVENQGVFQPLPGRLPPGSEHCSGIRVKAEAQGSTTLLVSYRHGHVHLSAKITIAAYLPLKAVDPSSVALVTLGSSKEMLFEGGPRPWILEPSKFFQNVTAEDTDSIGLALFAPHSSRNYQQHWILVTCQALGEQVIALSVGNKPSLTNPFPAVEPAVVKFVCAPPSRLTLAPVYTSPQLDMSCPLLQQNKQVVPVSSHRNPRLDLAAYDQEGRRFDNFSSLSIQWESTRPVLASIEPELPMQLVSQDDESGQKKLHGLQAILVHEASGTTAITATATGYQESHLSSARTKQPHDPLVPLSASIELILVEDVRVSPEEVTIYNHPGIQAELRIREGSGYFFLNTSTADVVKVAYQEARGVAMVHPLLPGSSTIMIHDLCLVFPAPAKAVVYVSDIQELYIRVVDKVEIGKTVKAYVRVLDLHKKPFLAKYFPFMDLKLRAASPIITLVALDEALDNYTITFLIRGVAIGQTSLTASVTNKAGQRINSAPQQIEVFPPFRLMPRKVTLLIGATMQVTSEGGPQPQSNILFSISNESVALVSAAGLVQGLAIGNGTVSGLVQAVDAETGKVVIISQDLVQVEVLLLRAVRIRAPIMRMRTGTQMPIYVTGITNHQNPFSFGNAVPGLTFHWSVTKRDVLDLRGRHHEASIRLPSQYNFAMNVLGRVKGRTGLRVVVKAVDPTSGQLYGLARELSDEIQVQVFEKLQLLNPEIEAEQILMSPNSYIKLQTNRDGAASLSYRVLDGPEKVPVVHVDEKGFLASGSMIGTSTIEVIAQEPFGANQTIIVAVKVSPVSYLRVSMSPVLHTQNKEALVAVPLGMTVTFTVHFHDNSGDVFHAHSSVLNFATNRDDFVQIGKGPTNNTCVVRTVSVGLTLLRVWDAEHPGLSDFMPLPVLQAISPELSGAMVVGDVLCLATVLTSLEGLSGTWSSSANSILHIDPKTGVAVARAVGSVTVYYEVAGHLRTYKEVVVSVPQRIMARHLHPIQTSFQEATASKVIVAVGDRSSNLRGECTPTQREVIQALHPETLISCQSQFKPAVFDFPSQDVFTVEPQFDTALGQYFCSITMHRLTDKQRKHLSMKKTALVVSASLSSSHFSTEQVGAEVPFSPGLFADQAEILLSNHYTSSEIRVFGAPEVLENLEVKSGSPAVLAFAKEKSFGWPSFITYTVGVLDPAAGSQGPLSTTLTFSSPVTNQAIAIPVTVAFVVDRRGPGPYGASLFQHFLDSYQVMFFTLFALLAGTAVMIIAYHTVCTPRDLAVPAALTPRASPGHSPHYFAASSPTSPNALPPARKASPPSGLWSPAYASH.

An N-terminal signal peptide occupies residues 1-26 (MAARGRGLLLLTLSVLLAAGPSAAAA). Residues 27-1808 (KLNIPKVLLP…LFQHFLDSYQ (1782 aa)) lie on the Perinuclear space side of the membrane. 12 N-linked (GlcNAc...) asparagine glycosylation sites follow: Asn-44, Asn-337, Asn-405, Asn-484, Asn-681, Asn-801, Asn-926, Asn-1039, Asn-1116, Asn-1135, Asn-1362, and Asn-1441. One can recognise a BIG2 domain in the interval 1078 to 1151 (FPPFRLMPRK…VQAVDAETGK (74 aa)). The chain crosses the membrane as a helical span at residues 1809–1829 (VMFFTLFALLAGTAVMIIAYH). Residues 1830–1887 (TVCTPRDLAVPAALTPRASPGHSPHYFAASSPTSPNALPPARKASPPSGLWSPAYASH) lie on the Cytoplasmic side of the membrane. Thr-1844 carries the phosphothreonine modification. A disordered region spans residues 1853-1887 (PHYFAASSPTSPNALPPARKASPPSGLWSPAYASH). A phosphoserine mark is found at Ser-1874, Ser-1877, Ser-1881, and Ser-1886.

This sequence belongs to the NUP210 family. As to quaternary structure, forms dimers and possibly higher-order oligomers. Post-translationally, N-glycosylated, but not all potential glycosylation sites may be used. Contains high-mannose type oligosaccharides. In terms of processing, phosphorylated at Ser-1881 in mitosis specifically; not phosphorylated in interphase. Ubiquitous expression, with highest levels in lung, liver, pancreas, testis, and ovary, intermediate levels in brain, kidney, and spleen, and lowest levels in heart and skeletal muscle.

It localises to the nucleus. The protein resides in the nuclear pore complex. It is found in the nucleus membrane. Its subcellular location is the endoplasmic reticulum membrane. In terms of biological role, nucleoporin essential for nuclear pore assembly and fusion, nuclear pore spacing, as well as structural integrity. The sequence is that of Nuclear pore membrane glycoprotein 210 (NUP210) from Homo sapiens (Human).